Here is a 467-residue protein sequence, read N- to C-terminus: UBX domain-containing protein 7 (467 aa).

Ala-2 carries the post-translational modification N-acetylalanine. In terms of domain architecture, UBA spans 2–54; that stretch reads AAHGGSAASSALKGLIQQFTAITGASESVGKHMLEACNNNLEMAVTMFLDGGG. Positions 57-77 are disordered; it reads EEPSTSSASVSTVRPHTEEEV. Residues 59-70 are compositionally biased toward polar residues; the sequence is PSTSSASVSTVR. Residues Lys-84 and Lys-112 each participate in a glycyl lysine isopeptide (Lys-Gly) (interchain with G-Cter in SUMO2) cross-link. A disordered region spans residues 240-260; sequence GQLDGLSSSPPKKCARSESLI. Phosphoserine is present on residues Ser-256, Ser-258, Ser-263, and Ser-266. One copy of the ubiquitin-interacting motif (UIM) repeat lies at 263–282; the sequence is SEDSQLEAAIRASLQETHFD. The interval 281–364 is disordered; sequence FDSAQAKQDS…TATNHQGLPS (84 aa). Residues 330–344 are compositionally biased toward basic and acidic residues; it reads HKDLGHRKEENRRPL. Ser-373 bears the Phosphoserine mark. The UBX domain maps to 386–463; the sequence is VNGPKAQLML…GLCPQETVFV (78 aa).

As to quaternary structure, interacts with neddylated CUL2, ubiquitinated HIF1A, and VCP/p97.

Its subcellular location is the nucleus. Ubiquitin-binding adapter that links a subset of NEDD8-associated cullin ring ligases (CRLs) to the segregase VCP/p97, to regulate turnover of their ubiquitination substrates. This chain is UBX domain-containing protein 7 (Ubxn7), found in Mus musculus (Mouse).